We begin with the raw amino-acid sequence, 236 residues long: UPF0502 protein Bpro_3844 (236 aa).

The protein belongs to the UPF0502 family.

The polypeptide is UPF0502 protein Bpro_3844 (Polaromonas sp. (strain JS666 / ATCC BAA-500)).